The chain runs to 246 residues: tRNA (guanine-N(7)-)-methyltransferase (246 aa).

Residues E77, E102, D129, and D152 each contribute to the S-adenosyl-L-methionine site. The active site involves D152. Substrate is bound by residues K156, D188, and 225–228 (TKFE).

This sequence belongs to the class I-like SAM-binding methyltransferase superfamily. TrmB family.

It carries out the reaction guanosine(46) in tRNA + S-adenosyl-L-methionine = N(7)-methylguanosine(46) in tRNA + S-adenosyl-L-homocysteine. It functions in the pathway tRNA modification; N(7)-methylguanine-tRNA biosynthesis. Functionally, catalyzes the formation of N(7)-methylguanine at position 46 (m7G46) in tRNA. The polypeptide is tRNA (guanine-N(7)-)-methyltransferase (Haemophilus influenzae (strain 86-028NP)).